The chain runs to 128 residues: Large ribosomal subunit protein bL20c (128 aa).

It belongs to the bacterial ribosomal protein bL20 family. In terms of assembly, component of the chloroplast large ribosomal subunit (LSU). Mature 70S chloroplast ribosomes of higher plants consist of a small (30S) and a large (50S) subunit. The 30S small subunit contains 1 molecule of ribosomal RNA (16S rRNA) and 24 different proteins. The 50S large subunit contains 3 rRNA molecules (23S, 5S and 4.5S rRNA) and 33 different proteins.

The protein resides in the plastid. It localises to the chloroplast. Component of the chloroplast ribosome (chloro-ribosome), a dedicated translation machinery responsible for the synthesis of chloroplast genome-encoded proteins, including proteins of the transcription and translation machinery and components of the photosynthetic apparatus. The sequence is that of Large ribosomal subunit protein bL20c (rpl20) from Spinacia oleracea (Spinach).